Here is a 117-residue protein sequence, read N- to C-terminus: Large ribosomal subunit protein uL18 (117 aa).

This sequence belongs to the universal ribosomal protein uL18 family. As to quaternary structure, part of the 50S ribosomal subunit; part of the 5S rRNA/L5/L18/L25 subcomplex. Contacts the 5S and 23S rRNAs.

This is one of the proteins that bind and probably mediate the attachment of the 5S RNA into the large ribosomal subunit, where it forms part of the central protuberance. The polypeptide is Large ribosomal subunit protein uL18 (Methylococcus capsulatus (strain ATCC 33009 / NCIMB 11132 / Bath)).